The chain runs to 442 residues: NADH-quinone oxidoreductase subunit D (442 aa).

It belongs to the complex I 49 kDa subunit family. In terms of assembly, NDH-1 is composed of 14 different subunits. Subunits NuoB, C, D, E, F, and G constitute the peripheral sector of the complex.

The protein resides in the cell membrane. It carries out the reaction a quinone + NADH + 5 H(+)(in) = a quinol + NAD(+) + 4 H(+)(out). NDH-1 shuttles electrons from NADH, via FMN and iron-sulfur (Fe-S) centers, to quinones in the respiratory chain. The immediate electron acceptor for the enzyme in this species is believed to be a menaquinone. Couples the redox reaction to proton translocation (for every two electrons transferred, four hydrogen ions are translocated across the cytoplasmic membrane), and thus conserves the redox energy in a proton gradient. The sequence is that of NADH-quinone oxidoreductase subunit D from Mycolicibacterium smegmatis (strain ATCC 700084 / mc(2)155) (Mycobacterium smegmatis).